Consider the following 217-residue polypeptide: Probable transaldolase (217 aa).

The Schiff-base intermediate with substrate role is filled by K83.

The protein belongs to the transaldolase family. Type 3B subfamily.

The protein resides in the cytoplasm. The enzyme catalyses D-sedoheptulose 7-phosphate + D-glyceraldehyde 3-phosphate = D-erythrose 4-phosphate + beta-D-fructose 6-phosphate. It functions in the pathway carbohydrate degradation; pentose phosphate pathway; D-glyceraldehyde 3-phosphate and beta-D-fructose 6-phosphate from D-ribose 5-phosphate and D-xylulose 5-phosphate (non-oxidative stage): step 2/3. Functionally, transaldolase is important for the balance of metabolites in the pentose-phosphate pathway. This is Probable transaldolase from Phenylobacterium zucineum (strain HLK1).